The primary structure comprises 721 residues: Oviduct-specific glycoprotein (721 aa).

An N-terminal signal peptide occupies residues 1–21; sequence MGRLLLLAGLVLLMKHSDGTA. Positions 22-385 constitute a GH18 domain; that stretch reads YKLVCYFTNW…HILNELLVQT (364 aa). A disulfide bridge links Cys26 with Cys51. Residues 71–72, 98–101, Tyr142, 211–214, and Trp355 contribute to the chitin site; these read LQ, GGWN, and LSYD. 2 N-linked (GlcNAc...) asparagine glycosylation sites follow: Asn402 and Asn442. A compositionally biased stretch (polar residues) spans 444 to 456; the sequence is TTVPSDGSVTPGG. Positions 444–465 are disordered; that stretch reads TTVPSDGSVTPGGTASPRKHAV. The N-linked (GlcNAc...) asparagine glycan is linked to Asn469. Tandem repeats lie at residues 486 to 492, 493 to 499, 500 to 506, 507 to 513, 514 to 520, 521 to 527, 528 to 534, 535 to 541, 542 to 548, 549 to 555, 556 to 562, 563 to 569, 570 to 576, 577 to 583, 584 to 590, 591 to 597, 598 to 604, 605 to 611, 612 to 618, 619 to 625, and 626 to 632. The 21 X 7 AA tandem repeats of S-K-[TAI]-[TI]-[TAP]-[GED]-[IVM] stretch occupies residues 486 to 632; sequence SKTTTGVSKT…PGISKTTPGM (147 aa).

The protein belongs to the glycosyl hydrolase 18 family. In terms of tissue distribution, epithelial cells of the oviduct.

Its subcellular location is the cytoplasmic vesicle. The protein localises to the secretory vesicle. Its function is as follows. Binds to oocyte zona pellucida in vivo. May play a role in the fertilization process and/or early embryonic development. This Mus musculus (Mouse) protein is Oviduct-specific glycoprotein (Ovgp1).